The primary structure comprises 632 residues: Phosphomethylpyrimidine synthase (632 aa).

Residues 1–13 (MNIRSNPDTTLPA) are compositionally biased toward polar residues. Residues 1–26 (MNIRSNPDTTLPAVTTGPLPSSRKIF) form a disordered region. Residues asparagine 221, methionine 250, tyrosine 279, histidine 315, 335-337 (SRG), 376-379 (DGLR), and glutamate 415 each bind substrate. Histidine 419 lines the Zn(2+) pocket. Residue tyrosine 442 coordinates substrate. Histidine 483 is a binding site for Zn(2+). Cysteine 563, cysteine 566, and cysteine 571 together coordinate [4Fe-4S] cluster.

Belongs to the ThiC family. In terms of assembly, homodimer. Requires [4Fe-4S] cluster as cofactor.

The enzyme catalyses 5-amino-1-(5-phospho-beta-D-ribosyl)imidazole + S-adenosyl-L-methionine = 4-amino-2-methyl-5-(phosphooxymethyl)pyrimidine + CO + 5'-deoxyadenosine + formate + L-methionine + 3 H(+). Its pathway is cofactor biosynthesis; thiamine diphosphate biosynthesis. Functionally, catalyzes the synthesis of the hydroxymethylpyrimidine phosphate (HMP-P) moiety of thiamine from aminoimidazole ribotide (AIR) in a radical S-adenosyl-L-methionine (SAM)-dependent reaction. The sequence is that of Phosphomethylpyrimidine synthase from Afipia carboxidovorans (strain ATCC 49405 / DSM 1227 / KCTC 32145 / OM5) (Oligotropha carboxidovorans).